A 644-amino-acid chain; its full sequence is Keratin, type II cytoskeletal 1 (644 aa).

The segment at 2-179 (SRQFSSRSGY…DPEIQKVKSR (178 aa)) is head. The residue at position 12 (arginine 12) is an Omega-N-methylarginine. Residues serine 18 and serine 21 each carry the phosphoserine modification. Residues 22–38 (AGIINYQRRTTSSSTRR) are compositionally biased toward low complexity. The disordered stretch occupies residues 22–47 (AGIINYQRRTTSSSTRRSGGGGGRFS). Arginine 45 is subject to Omega-N-methylarginine. Serine 66 is subject to Phosphoserine. Residue arginine 82 is modified to Omega-N-methylarginine. The segment at 180–215 (EREQIKSLNNQFASFIDKVRFLEQQNQVLQTKWELL) is coil 1A. In terms of domain architecture, IF rod spans 180–493 (EREQIKSLNN…TLLEGEESRM (314 aa)). Residues 216 to 234 (QQVDTSTRTHNLEPYFESF) are linker 1. The coil 1B stretch occupies residues 235-326 (INNLRRRVDQ…ALYQAELSQM (92 aa)). Lysine 276 carries the N6,N6-dimethyllysine modification. A linker 12 region spans residues 327-350 (QTQISETNVILSMDNNRSLDLDSI). Serine 344 is modified (phosphoserine). The interval 351 to 489 (IAEVKAQYED…ATYRTLLEGE (139 aa)) is coil 2. Disordered stretches follow at residues 489–523 (EESRMSGECAPNVSVSVSTSHTTISGGGSRGGGGG) and 568–644 (SGGG…GVTR). The segment at 490-644 (ESRMSGECAP…VSTTYSGVTR (155 aa)) is tail. The segment covering 501–511 (VSVSVSTSHTT) has biased composition (low complexity). Gly residues-rich tracts occupy residues 513-523 (SGGGSRGGGGG) and 568-620 (SGGG…GSSS). Arginine 518 and arginine 588 each carry omega-N-methylarginine. The segment covering 621 to 631 (GGVKSSGGSSS) has biased composition (low complexity). The segment covering 632–644 (VKFVSTTYSGVTR) has biased composition (polar residues).

This sequence belongs to the intermediate filament family. In terms of assembly, heterotetramer of two type I and two type II keratins. Heterodimer with KRT10. Two heterodimers of KRT1 and KRT10 form a heterotetramer. Forms a heterodimer with KRT14; the interaction is more abundant in the absence of KRT5. Interacts with PLEC isoform 1C, when in a heterodimer with KRT10. Interacts with ITGB1 in the presence of RACK1 and SRC, and with RACK1. Interacts with C1QBP; the association represents a cell surface kininogen receptor. Interacts with EPPK1; interaction is dependent of higher-order structure of intermediate filament. Undergoes deimination of some arginine residues (citrullination). As to expression, the source of this protein is neonatal foreskin. The 67-kDa type II keratins are expressed in terminally differentiating epidermis.

The protein localises to the cell membrane. The protein resides in the cytoplasm. In terms of biological role, may regulate the activity of kinases such as PKC and SRC via binding to integrin beta-1 (ITB1) and the receptor of activated protein C kinase 1 (RACK1). In complex with C1QBP is a high affinity receptor for kininogen-1/HMWK. This Homo sapiens (Human) protein is Keratin, type II cytoskeletal 1 (KRT1).